We begin with the raw amino-acid sequence, 458 residues long: NADH-quinone oxidoreductase subunit N (458 aa).

14 helical membrane passes run 2–22, 30–50, 62–82, 93–113, 118–138, 153–173, 196–216, 235–255, 261–281, 290–310, 319–339, 361–381, 397–417, and 438–458; these read LLIL…CFAL, IIYN…FKYS, GINI…SLII, AIKF…FVAI, FLLL…LAGF, FILG…IYGF, LIIG…SSPL, FTSA…KLII, INYN…AFGA, LMAY…ILPN, LYIL…IMLF, IAAL…LTGF, FTLA…YLKV, and LLLI…IILF.

Belongs to the complex I subunit 2 family. NDH-1 is composed of 14 different subunits. Subunits NuoA, H, J, K, L, M, N constitute the membrane sector of the complex.

It localises to the cell inner membrane. It catalyses the reaction a quinone + NADH + 5 H(+)(in) = a quinol + NAD(+) + 4 H(+)(out). Functionally, NDH-1 shuttles electrons from NADH, via FMN and iron-sulfur (Fe-S) centers, to quinones in the respiratory chain. The immediate electron acceptor for the enzyme in this species is believed to be ubiquinone. Couples the redox reaction to proton translocation (for every two electrons transferred, four hydrogen ions are translocated across the cytoplasmic membrane), and thus conserves the redox energy in a proton gradient. This chain is NADH-quinone oxidoreductase subunit N, found in Rickettsia typhi (strain ATCC VR-144 / Wilmington).